We begin with the raw amino-acid sequence, 1045 residues long: Elongation factor 3 (1045 aa).

HEAT repeat units lie at residues 5–42 (DQSL…GNII), 43–85 (EHDI…PSVE), 86–123 (PFVI…AINP), 125–162 (AIKA…AAKE), 166–203 (LRMP…TVDN), 205–241 (DIER…EVTP), and 242–279 (ATLS…LVED). ADP is bound by residues Ile42, His44, and Ser83. ADP is bound by residues Thr392, His396, and Glu397. 2 consecutive ABC transporter domains span residues 426–641 (DEGE…YYEL) and 667–993 (VKVS…KKED). The ADP site is built by Asn703, Glu922, Asn925, and His951. The interval 974-1045 (SGHNWVSGQG…AYVSSDDEDF (72 aa)) is disordered. Residues 1007-1031 (GGKKKKKLSSAELRKKKKERMKKKK) show a composition bias toward basic residues.

The protein belongs to the ABC transporter superfamily. ABCF family. EF3 subfamily. In terms of assembly, monomer.

It is found in the cytoplasm. Its subcellular location is the cytosol. The enzyme catalyses ATP + H2O = ADP + phosphate + H(+). It participates in protein biosynthesis; polypeptide chain elongation. Its function is as follows. Ribosome-dependent ATPase that functions in cytoplasmic translation elongation. Required for the ATP-dependent release of deacylated tRNA from the ribosomal E-site during protein biosynthesis. Stimulates the eEF1A-dependent binding of aminoacyl-tRNA to the ribosomal A-site, which has reduced affinity for tRNA as long as the E-site is occupied. Assists translation termination by stimulating the release of nascent protein from the ribosome by release factors. The sequence is that of Elongation factor 3 (TEF3) from Candida glabrata (strain ATCC 2001 / BCRC 20586 / JCM 3761 / NBRC 0622 / NRRL Y-65 / CBS 138) (Yeast).